We begin with the raw amino-acid sequence, 347 residues long: UDP-N-acetylenolpyruvoylglucosamine reductase (347 aa).

In terms of domain architecture, FAD-binding PCMH-type spans 27–197; that stretch reads LPARAQRLAR…TGIELRLNKM (171 aa). Arg-173 is a catalytic residue. The Proton donor role is filled by Ser-247. Glu-342 is a catalytic residue.

It belongs to the MurB family. Requires FAD as cofactor.

The protein localises to the cytoplasm. It catalyses the reaction UDP-N-acetyl-alpha-D-muramate + NADP(+) = UDP-N-acetyl-3-O-(1-carboxyvinyl)-alpha-D-glucosamine + NADPH + H(+). It participates in cell wall biogenesis; peptidoglycan biosynthesis. In terms of biological role, cell wall formation. This Alcanivorax borkumensis (strain ATCC 700651 / DSM 11573 / NCIMB 13689 / SK2) protein is UDP-N-acetylenolpyruvoylglucosamine reductase.